We begin with the raw amino-acid sequence, 117 residues long: Large ribosomal subunit protein bL20 (117 aa).

This sequence belongs to the bacterial ribosomal protein bL20 family.

Binds directly to 23S ribosomal RNA and is necessary for the in vitro assembly process of the 50S ribosomal subunit. It is not involved in the protein synthesizing functions of that subunit. The protein is Large ribosomal subunit protein bL20 of Aliivibrio salmonicida (strain LFI1238) (Vibrio salmonicida (strain LFI1238)).